The primary structure comprises 346 residues: UDP-3-O-acylglucosamine N-acyltransferase (346 aa).

The active-site Proton acceptor is the His253.

The protein belongs to the transferase hexapeptide repeat family. LpxD subfamily. In terms of assembly, homotrimer.

It carries out the reaction a UDP-3-O-[(3R)-3-hydroxyacyl]-alpha-D-glucosamine + a (3R)-hydroxyacyl-[ACP] = a UDP-2-N,3-O-bis[(3R)-3-hydroxyacyl]-alpha-D-glucosamine + holo-[ACP] + H(+). It functions in the pathway bacterial outer membrane biogenesis; LPS lipid A biosynthesis. In terms of biological role, catalyzes the N-acylation of UDP-3-O-acylglucosamine using 3-hydroxyacyl-ACP as the acyl donor. Is involved in the biosynthesis of lipid A, a phosphorylated glycolipid that anchors the lipopolysaccharide to the outer membrane of the cell. The sequence is that of UDP-3-O-acylglucosamine N-acyltransferase from Rickettsia felis (strain ATCC VR-1525 / URRWXCal2) (Rickettsia azadi).